The chain runs to 292 residues: Glycine--tRNA ligase alpha subunit (292 aa).

It belongs to the class-II aminoacyl-tRNA synthetase family. In terms of assembly, tetramer of two alpha and two beta subunits.

Its subcellular location is the cytoplasm. It catalyses the reaction tRNA(Gly) + glycine + ATP = glycyl-tRNA(Gly) + AMP + diphosphate. The chain is Glycine--tRNA ligase alpha subunit from Syntrophus aciditrophicus (strain SB).